We begin with the raw amino-acid sequence, 102 residues long: Small ribosomal subunit protein uS10 (102 aa).

This sequence belongs to the universal ribosomal protein uS10 family. In terms of assembly, part of the 30S ribosomal subunit.

In terms of biological role, involved in the binding of tRNA to the ribosomes. In Chloroflexus aurantiacus (strain ATCC 29366 / DSM 635 / J-10-fl), this protein is Small ribosomal subunit protein uS10.